Reading from the N-terminus, the 172-residue chain is Thioredoxin M-type, chloroplastic (172 aa).

The transit peptide at 1 to 60 directs the protein to the chloroplast; sequence MALESLFKSIHTKTSLSSSIVFIFKGKACLLTSKSRIQESFAELNSFTSLVLLIENHVLL. One can recognise a Thioredoxin domain in the interval 61–172; that stretch reads HAREAVNEVQ…TLSEKVEKYI (112 aa). Active-site nucleophile residues include C97 and C100. The cysteines at positions 97 and 100 are disulfide-linked.

It belongs to the thioredoxin family. Plant M-type subfamily. Forms a complex with heterodimeric ferredoxin-thioredoxin reductase (FTR) and ferredoxin.

It is found in the plastid. The protein localises to the chloroplast. In terms of biological role, participates in various redox reactions through the reversible oxidation of the active center dithiol to a disulfide. The M form is known to activate NADP-malate dehydrogenase. The protein is Thioredoxin M-type, chloroplastic of Pisum sativum (Garden pea).